A 396-amino-acid polypeptide reads, in one-letter code: Probable tRNA sulfurtransferase (396 aa).

In terms of domain architecture, THUMP spans 63–166 (AAAARASARV…GRRAYFFDTI (104 aa)). ATP contacts are provided by residues 184–185 (LY), Arg266, Gly288, and Gln297.

Belongs to the ThiI family.

The protein resides in the cytoplasm. It carries out the reaction [ThiI sulfur-carrier protein]-S-sulfanyl-L-cysteine + a uridine in tRNA + 2 reduced [2Fe-2S]-[ferredoxin] + ATP + H(+) = [ThiI sulfur-carrier protein]-L-cysteine + a 4-thiouridine in tRNA + 2 oxidized [2Fe-2S]-[ferredoxin] + AMP + diphosphate. The catalysed reaction is [ThiS sulfur-carrier protein]-C-terminal Gly-Gly-AMP + S-sulfanyl-L-cysteinyl-[cysteine desulfurase] + AH2 = [ThiS sulfur-carrier protein]-C-terminal-Gly-aminoethanethioate + L-cysteinyl-[cysteine desulfurase] + A + AMP + 2 H(+). It functions in the pathway cofactor biosynthesis; thiamine diphosphate biosynthesis. Its function is as follows. Catalyzes the ATP-dependent transfer of a sulfur to tRNA to produce 4-thiouridine in position 8 of tRNAs, which functions as a near-UV photosensor. Also catalyzes the transfer of sulfur to the sulfur carrier protein ThiS, forming ThiS-thiocarboxylate. This is a step in the synthesis of thiazole, in the thiamine biosynthesis pathway. The sulfur is donated as persulfide by IscS. This is Probable tRNA sulfurtransferase from Aeropyrum pernix (strain ATCC 700893 / DSM 11879 / JCM 9820 / NBRC 100138 / K1).